Consider the following 306-residue polypeptide: Ribosomal protein L11 methyltransferase (306 aa).

The S-adenosyl-L-methionine site is built by T154, G179, D201, and N242.

Belongs to the methyltransferase superfamily. PrmA family.

The protein resides in the cytoplasm. The enzyme catalyses L-lysyl-[protein] + 3 S-adenosyl-L-methionine = N(6),N(6),N(6)-trimethyl-L-lysyl-[protein] + 3 S-adenosyl-L-homocysteine + 3 H(+). Its function is as follows. Methylates ribosomal protein L11. The polypeptide is Ribosomal protein L11 methyltransferase (Xanthomonas axonopodis pv. citri (strain 306)).